The chain runs to 463 residues: Bifunctional protein HldE (463 aa).

Residues 1 to 315 form a ribokinase region; that stretch reads MKKILVIGDL…LILNQTHPKI (315 aa). Position 191-194 (191-194) interacts with ATP; sequence NRAE. Asp260 is a catalytic residue. The tract at residues 334-463 is cytidylyltransferase; that stretch reads FTNGCFDILH…IEKIKRTHND (130 aa).

This sequence in the N-terminal section; belongs to the carbohydrate kinase PfkB family. The protein in the C-terminal section; belongs to the cytidylyltransferase family. Homodimer.

The enzyme catalyses D-glycero-beta-D-manno-heptose 7-phosphate + ATP = D-glycero-beta-D-manno-heptose 1,7-bisphosphate + ADP + H(+). It catalyses the reaction D-glycero-beta-D-manno-heptose 1-phosphate + ATP + H(+) = ADP-D-glycero-beta-D-manno-heptose + diphosphate. Its pathway is nucleotide-sugar biosynthesis; ADP-L-glycero-beta-D-manno-heptose biosynthesis; ADP-L-glycero-beta-D-manno-heptose from D-glycero-beta-D-manno-heptose 7-phosphate: step 1/4. It functions in the pathway nucleotide-sugar biosynthesis; ADP-L-glycero-beta-D-manno-heptose biosynthesis; ADP-L-glycero-beta-D-manno-heptose from D-glycero-beta-D-manno-heptose 7-phosphate: step 3/4. It participates in bacterial outer membrane biogenesis; LPS core biosynthesis. In terms of biological role, catalyzes the phosphorylation of D-glycero-D-manno-heptose 7-phosphate at the C-1 position to selectively form D-glycero-beta-D-manno-heptose-1,7-bisphosphate. Its function is as follows. Catalyzes the ADP transfer from ATP to D-glycero-beta-D-manno-heptose 1-phosphate, yielding ADP-D-glycero-beta-D-manno-heptose. This Helicobacter pylori (strain J99 / ATCC 700824) (Campylobacter pylori J99) protein is Bifunctional protein HldE.